The sequence spans 413 residues: Patatin-like protein 3 (413 aa).

The region spanning 54–245 is the PNPLA domain; the sequence is LSVDGGARPE…ALGNPTAAAI (192 aa). The GGXR signature appears at 58–61; that stretch reads GGAR. S100 functions as the Nucleophile in the catalytic mechanism. The segment at 384 to 413 is disordered; the sequence is EHGRRKQHVPPAASGGGGGGLDCHVSKKQP.

The protein belongs to the patatin family.

Its function is as follows. Possesses non-specific lipolytic acyl hydrolase (LAH) activity. Hydrolyzes phospholipids as well as galactolipids. May play a role in disease resistance. The sequence is that of Patatin-like protein 3 (PLP3) from Oryza sativa subsp. indica (Rice).